Here is a 410-residue protein sequence, read N- to C-terminus: MQIYKVGGAVRDRLLGRPVTDIDWVVVGASSDEMLARGYRPVGADFPVFLHPQSGEEYALARTERKSGRGYGGFTFHASPEVTLEEDLTRRDLTINAMAEDEQGRVIDPYGGQADLEARLLRHVSPAFAEDPLRVLRVARFAARYAGLGFRVAAETLALMRQLAESGELQALTPERSWKEISRALMEPNPEVFIQVLHDCGALAELIPEVEALFGVPQPAAHHPEIDTGVHVLSVLQQCARHRQPLSVRWACLLHDLGKGLTSEADWPRHIAHEARGVPLIDAVNQRFRVPRECQELARLVGEYHTHAHRALELRPNTLLELLQSFDVYRRPQRFEEFVAASEMDARGRLGLEQRDYPQAAYLLGAAQAARAVSVKPLVEKGLKGAELGEALKRARLAALKAYKEERGKA.

Positions 8 and 11 each coordinate ATP. Gly-8 and Arg-11 together coordinate CTP. Residues Asp-21 and Asp-23 each contribute to the Mg(2+) site. Positions 91, 137, and 140 each coordinate ATP. 3 residues coordinate CTP: Arg-91, Arg-137, and Arg-140. Residues 228–329 form the HD domain; the sequence is TGVHVLSVLQ…LELLQSFDVY (102 aa).

The protein belongs to the tRNA nucleotidyltransferase/poly(A) polymerase family. Bacterial CCA-adding enzyme type 1 subfamily. In terms of assembly, monomer. Can also form homodimers and oligomers. It depends on Mg(2+) as a cofactor. Ni(2+) serves as cofactor.

The enzyme catalyses a tRNA precursor + 2 CTP + ATP = a tRNA with a 3' CCA end + 3 diphosphate. It carries out the reaction a tRNA with a 3' CCA end + 2 CTP + ATP = a tRNA with a 3' CCACCA end + 3 diphosphate. Functionally, catalyzes the addition and repair of the essential 3'-terminal CCA sequence in tRNAs without using a nucleic acid template. Adds these three nucleotides in the order of C, C, and A to the tRNA nucleotide-73, using CTP and ATP as substrates and producing inorganic pyrophosphate. tRNA 3'-terminal CCA addition is required both for tRNA processing and repair. Also involved in tRNA surveillance by mediating tandem CCA addition to generate a CCACCA at the 3' terminus of unstable tRNAs. While stable tRNAs receive only 3'-terminal CCA, unstable tRNAs are marked with CCACCA and rapidly degraded. This Pseudomonas aeruginosa (strain ATCC 15692 / DSM 22644 / CIP 104116 / JCM 14847 / LMG 12228 / 1C / PRS 101 / PAO1) protein is Multifunctional CCA protein.